The sequence spans 579 residues: Folliculin (579 aa).

Positions 31–82 (QGAGSGDSPDQVEQAEEEEGGIQMSSRVRAHSPAEGASSESSSPGPKKSDMC) are disordered. Phosphoserine occurs at positions 62 and 73. Positions 63–76 (PAEGASSESSSPGP) are enriched in low complexity. In terms of domain architecture, uDENN FLCN/SMCR8-type spans 86–242 (RSLAVGHPGY…RNGNAARSLT (157 aa)). Positions 287–310 (EKLADLEEESESWDNSEAEEEEKA) form a coiled coil. A compositionally biased stretch (acidic residues) spans 294-308 (EESESWDNSEAEEEE). The interval 294-323 (EESESWDNSEAEEEEKAPVTPEGAEGRELT) is disordered. Phosphoserine is present on residues S302, S406, S537, S542, and S571. Residues 339 to 491 (QPPKLTGFKS…ILNKIEAALT (153 aa)) enclose the cDENN FLCN/SMCR8-type domain. Residues 493–558 (QNLSVDVVDQ…LLKFWMTGLS (66 aa)) enclose the dDENN FLCN/SMCR8-type domain.

This sequence belongs to the folliculin family. Interacts (via C-terminus) with FNIP1 or FNIP2 (via C-terminus). Component of the lysosomal folliculin complex (LFC), composed of FLCN, FNIP1 (or FNIP2), RagA/RRAGA or RagB/RRAGB GDP-bound, RagC/RRAGC or RagD/RRAGD GTP-bound, and Ragulator. Interaction with FNIP1 or FNIP2 mediates indirect interaction with the PRKAA1, PRKAB1 and PRKAG1 subunits of 5'-AMP-activated protein kinase (AMPK). Interacts with HSP90AA1 in the presence of FNIP1. Interacts with HSP70, STUB1, CDC37, AHSA1, CCT2, STIP1, PTGES3 and PPP5C. Interacts with GABARAP; interaction takes place in the presence of FNIP1 and/or FNIP2. Interacts with RILP; the interaction is direct and promotes association between RILP and RAB34. Interacts with KIF3A and KIF3B. Interacts with lactate dehydrogenase LDHA, but not LDHB; the interaction is direct, may preferentially bind LDHA dimers rather than tetramers, and regulates LDHA activity, acting as an uncompetitive inhibitor. Phosphorylation by ULK1 modulates the interaction with GABARAP and is required to regulate autophagy. In terms of tissue distribution, highly expressed in adult heart, pancreas, and prostate with moderate expression in adult brain, kidney, liver, adipose tissue and lung.

The protein localises to the lysosome membrane. The protein resides in the cytoplasm. Its subcellular location is the cytosol. It is found in the cell projection. It localises to the cilium. The protein localises to the cytoskeleton. The protein resides in the microtubule organizing center. Its subcellular location is the centrosome. It is found in the spindle. It localises to the nucleus. Its activity is regulated as follows. GTPase-activating activity is inhibited in the folliculin complex (LFC), which stabilizes the GDP-bound state of RagA/RRAGA (or RagB/RRAGB), because Arg-164 is located far from the RagC/RRAGC or RagD/RRAGD nucleotide pocket. Disassembly of the LFC complex upon amino acid restimulation liberates the GTPase-activating activity. In terms of biological role, multi-functional protein, involved in both the cellular response to amino acid availability and in the regulation of glycolysis. GTPase-activating protein that plays a key role in the cellular response to amino acid availability through regulation of the non-canonical mTORC1 signaling cascade controlling the MiT/TFE factors TFEB and TFE3. Activates mTORC1 by acting as a GTPase-activating protein: specifically stimulates GTP hydrolysis by RagC/RRAGC or RagD/RRAGD, promoting the conversion to the GDP-bound state of RagC/RRAGC or RagD/RRAGD, and thereby activating the kinase activity of mTORC1. The GTPase-activating activity is inhibited during starvation and activated in presence of nutrients. Acts as a key component for non-canonical mTORC1-dependent control of the MiT/TFE factors TFEB and TFE3, while it is not involved in mTORC1-dependent phosphorylation of canonical RPS6KB1/S6K1 and EIF4EBP1/4E-BP1. In low-amino acid conditions, the lysosomal folliculin complex (LFC) is formed on the membrane of lysosomes, which inhibits the GTPase-activating activity of FLCN, inactivates mTORC1 and maximizes nuclear translocation of TFEB and TFE3. Upon amino acid restimulation, RagA/RRAGA (or RagB/RRAGB) nucleotide exchange promotes disassembly of the LFC complex and liberates the GTPase-activating activity of FLCN, leading to activation of mTORC1 and subsequent cytoplasmic retention of TFEB and TFE3. Indirectly acts as a positive regulator of Wnt signaling by promoting mTOR-dependent cytoplasmic retention of MiT/TFE factor TFE3. Required for the exit of hematopoietic stem cell from pluripotency by promoting mTOR-dependent cytoplasmic retention of TFE3, thereby increasing Wnt signaling. Involved in the control of embryonic stem cells differentiation; together with LAMTOR1 it is necessary to recruit and activate RagC/RRAGC and RagD/RRAGD at the lysosomes, and to induce exit of embryonic stem cells from pluripotency via non-canonical, mTOR-independent TFE3 inactivation. Acts as an inhibitor of browning of adipose tissue by regulating mTOR-dependent cytoplasmic retention of TFE3. In response to flow stress, regulates STK11/LKB1 accumulation and mTORC1 activation through primary cilia: may act by recruiting STK11/LKB1 to primary cilia for activation of AMPK resided at basal bodies, causing mTORC1 down-regulation. Together with FNIP1 and/or FNIP2, regulates autophagy: following phosphorylation by ULK1, interacts with GABARAP and promotes autophagy. Required for starvation-induced perinuclear clustering of lysosomes by promoting association of RILP with its effector RAB34. Regulates glycolysis by binding to lactate dehydrogenase LDHA, acting as an uncompetitive inhibitor. This is Folliculin from Mus musculus (Mouse).